A 131-amino-acid chain; its full sequence is Glycine cleavage system H protein (131 aa).

Positions 24–106 (IATLGISAFA…HGEGWLLKVR (83 aa)) constitute a Lipoyl-binding domain. Lysine 65 is subject to N6-lipoyllysine.

This sequence belongs to the GcvH family. As to quaternary structure, the glycine cleavage system is composed of four proteins: P, T, L and H. The cofactor is (R)-lipoate.

The glycine cleavage system catalyzes the degradation of glycine. The H protein shuttles the methylamine group of glycine from the P protein to the T protein. The chain is Glycine cleavage system H protein from Microcystis aeruginosa (strain NIES-843 / IAM M-2473).